The following is a 306-amino-acid chain: D-alanine--D-alanine ligase (306 aa).

Positions 102-300 (KIIAASAGVS…YGDIVKWIVE (199 aa)) constitute an ATP-grasp domain. 128-183 (PMKPPYVIKPIREGSSFGVVIVGSDETMPLHDIMNNEWVYDDEIMVEKYVPGRELT) contacts ATP. Positions 253, 267, and 269 each coordinate Mg(2+).

This sequence belongs to the D-alanine--D-alanine ligase family. It depends on Mg(2+) as a cofactor. Requires Mn(2+) as cofactor.

Its subcellular location is the cytoplasm. The catalysed reaction is 2 D-alanine + ATP = D-alanyl-D-alanine + ADP + phosphate + H(+). It participates in cell wall biogenesis; peptidoglycan biosynthesis. Cell wall formation. The polypeptide is D-alanine--D-alanine ligase (Bartonella bacilliformis (strain ATCC 35685 / KC583 / Herrer 020/F12,63)).